The chain runs to 901 residues: Protein translocase subunit SecA (901 aa).

ATP-binding positions include Q87, 105-109 (GEGKT), and D512. The segment at 852–901 (AQMQQLSHQSDDEAAAEDLAAQTGERKVGRNDPCPCGSGKKYKQCHGRLS) is disordered. Residues C885, C887, C896, and H897 each contribute to the Zn(2+) site. The span at 891 to 901 (KKYKQCHGRLS) shows a compositional bias: basic residues.

Belongs to the SecA family. In terms of assembly, monomer and homodimer. Part of the essential Sec protein translocation apparatus which comprises SecA, SecYEG and auxiliary proteins SecDF-YajC and YidC. It depends on Zn(2+) as a cofactor.

The protein localises to the cell inner membrane. Its subcellular location is the cytoplasm. It carries out the reaction ATP + H2O + cellular proteinSide 1 = ADP + phosphate + cellular proteinSide 2.. Part of the Sec protein translocase complex. Interacts with the SecYEG preprotein conducting channel. Has a central role in coupling the hydrolysis of ATP to the transfer of proteins into and across the cell membrane, serving both as a receptor for the preprotein-SecB complex and as an ATP-driven molecular motor driving the stepwise translocation of polypeptide chains across the membrane. The protein is Protein translocase subunit SecA of Klebsiella pneumoniae (strain 342).